We begin with the raw amino-acid sequence, 430 residues long: ATP-dependent RNA helicase RhlB (430 aa).

The Q motif motif lies at 9 to 37 (QKFSDFALHPQVIEALETKGFHNCTPIQA). Residues 40–219 (LPFTLSGRDV…FENMNNAEYV (180 aa)) enclose the Helicase ATP-binding domain. 53–60 (AQTGTGKT) is an ATP binding site. The DEAD box signature appears at 165–168 (DEAD). The 146-residue stretch at 245–390 (RLLQTLIEEE…VSRYNSDALM (146 aa)) folds into the Helicase C-terminal domain. A disordered region spans residues 388–430 (ALMTDLPPPKRLTRNRSGNGPRRGGNNNRRSSASRSPNRKRSG). The segment covering 402–423 (NRSGNGPRRGGNNNRRSSASRS) has biased composition (low complexity).

Belongs to the DEAD box helicase family. RhlB subfamily. As to quaternary structure, component of the RNA degradosome, which is a multiprotein complex involved in RNA processing and mRNA degradation.

It is found in the cytoplasm. It catalyses the reaction ATP + H2O = ADP + phosphate + H(+). Its function is as follows. DEAD-box RNA helicase involved in RNA degradation. Has RNA-dependent ATPase activity and unwinds double-stranded RNA. The polypeptide is ATP-dependent RNA helicase RhlB (Erwinia tasmaniensis (strain DSM 17950 / CFBP 7177 / CIP 109463 / NCPPB 4357 / Et1/99)).